Consider the following 479-residue polypeptide: Anaerobic nitric oxide reductase flavorubredoxin (479 aa).

Residues 30–210 (LRGSSYNSYL…PFSRLVTPKI (181 aa)) form a zinc metallo-hydrolase region. Positions 79, 81, 83, 147, 166, and 227 each coordinate Fe cation. Residues 254-393 (ITIFYDTMSN…LCRQHGRDIA (140 aa)) enclose the Flavodoxin-like domain. Residues 260–264 (TMSNN) and 342–369 (AFGS…EMSL) each bind FMN. The 52-residue stretch at 423–474 (GPKMQCSVCQWIYDPALGEPLQDVAPGTPWSDVPDNFLCPECSLGKDVFDVL) folds into the Rubredoxin-like domain. Fe cation-binding residues include cysteine 428, cysteine 431, cysteine 461, and cysteine 464.

This sequence in the N-terminal section; belongs to the zinc metallo-hydrolase group 3 family. As to quaternary structure, homotetramer. It depends on Fe cation as a cofactor. FMN is required as a cofactor.

The protein localises to the cytoplasm. It functions in the pathway nitrogen metabolism; nitric oxide reduction. Anaerobic nitric oxide reductase; uses NADH to detoxify nitric oxide (NO), protecting several 4Fe-4S NO-sensitive enzymes. Has at least 2 reductase partners, only one of which (NorW, flavorubredoxin reductase) has been identified. NO probably binds to the di-iron center; electrons enter from the NorW at rubredoxin and are transferred sequentially to the FMN center and the di-iron center. Also able to function as an aerobic oxygen reductase. In Salmonella paratyphi B (strain ATCC BAA-1250 / SPB7), this protein is Anaerobic nitric oxide reductase flavorubredoxin.